We begin with the raw amino-acid sequence, 185 residues long: Cuticle protein 18.6, isoform B (185 aa).

6 consecutive repeat copies span residues 21–24 (AAPA), 33–36 (AAPV), 41–44 (AAPV), 133–136 (AAPV), 139–142 (AAPV), and 150–153 (AAPV). The Chitin-binding type R&amp;R domain occupies 64 to 134 (HPQYSFAYNV…KEAGAHPAAA (71 aa)).

Its function is as follows. Component of the cuticle of migratory locust which contains more than 100 different structural proteins. The chain is Cuticle protein 18.6, isoform B from Locusta migratoria (Migratory locust).